The chain runs to 194 residues: Cyclin-dependent kinase inhibitor 4 (194 aa).

The span at 49 to 58 shows a compositional bias: basic and acidic residues; it reads LELRSRRLEK. 2 disordered regions span residues 49 to 70 and 107 to 139; these read LELRSRRLEKLPPPPPPPPRRR and TRETTPCSLIRDPDTISTPGSTTRRSHSSSHCK.

Belongs to the CDI family. ICK/KRP subfamily.

In Oryza sativa subsp. japonica (Rice), this protein is Cyclin-dependent kinase inhibitor 4 (KRP4).